The chain runs to 642 residues: Transmembrane 9 superfamily member 4 (642 aa).

The first 23 residues, 1–23 (MATAMDWLPWSLLLFSLMCETSA), serve as a signal peptide directing secretion. Topologically, residues 24–281 (FYVPGVAPIN…TMSDVQIHWF (258 aa)) are extracellular. Residues 282–302 (SIINSVVVVFFLSGILSMIII) traverse the membrane as a helical segment. At 303-346 (RTLRKDIANYNKEDDIEDTMEESGWKLVHGDVFRPPQYPMILSS) the chain is on the cytoplasmic side. Residue Tyr-312 is modified to Phosphotyrosine. Residues 347-367 (LLGSGIQLFCMILIVIFVAML) traverse the membrane as a helical segment. The Extracellular segment spans residues 368 to 376 (GMLSPSSRG). The chain crosses the membrane as a helical span at residues 377 to 397 (ALMTTACFLFMFMGVFGGFSA). Topologically, residues 398-416 (GRLYRTLKGHRWKKGAFCT) are cytoplasmic. A helical transmembrane segment spans residues 417–437 (ATLYPGVVFGICFVLNCFIWG). Residues 438-449 (KHSSGAVPFPTM) are Extracellular-facing. The helical transmembrane segment at 450–470 (VALLCMWFGISLPLVYLGYYF) threads the bilayer. The Cytoplasmic segment spans residues 471–501 (GFRKQPYDNPVRTNQIPRQIPEQRWYMNRFV). The helical transmembrane segment at 502–522 (GILMAGILPFGAMFIELFFIF) threads the bilayer. The Extracellular segment spans residues 523-535 (SAIWENQFYYLFG). Residues 536–556 (FLFLVFIILVVSCSQISIVMV) form a helical membrane-spanning segment. The Cytoplasmic segment spans residues 557-570 (YFQLCAEDYRWWWR). The chain crosses the membrane as a helical span at residues 571 to 591 (NFLVSGGSAFYVLVYAIFYFV). Topologically, residues 592–598 (NKLDIVE) are extracellular. Residues 599–619 (FIPSLLYFGYTALMVLSFWLL) traverse the membrane as a helical segment. Residues 620–642 (TGTIGFYAAYMFVRKIYAAVKID) lie on the Cytoplasmic side of the membrane.

It belongs to the nonaspanin (TM9SF) (TC 9.A.2) family. In terms of assembly, interacts with ATP6V1H in colon cancer cells. Highly expressed in metastatic melanoma cells whereas it is undetectable in primary melanoma cells, healthy skin tissues and peripheral blood lymphocytes. Expressed in CD34(+) hematopoietic progenitor cells and during monocyte and granulocyte differentiation. Overexpressed in acute myeloid leukemia, in particular in those displaying granulocytic differentiation (at protein level).

It is found in the membrane. It localises to the golgi apparatus. Its subcellular location is the early endosome. In terms of biological role, associates with proteins harboring glycine-rich transmembrane domains and ensures their efficient localization to the cell surface. Regulates the assembly and activity of V-ATPase in colon cancer cells via its interaction with V-type proton ATPase subunit H (ATP6V1H) and contributes to V-ATPase-mediated pH alterations in cancer cells which play an important role in drug resistance and invasiveness of colon cancer cells. Plays an important role in an atypical phagocytic activity of metastatic melanoma cells called cannibalism and is involved in the pH regulation of the intracellular vesicles in tumor cells. This Homo sapiens (Human) protein is Transmembrane 9 superfamily member 4 (TM9SF4).